The sequence spans 2135 residues: Plexin-B1 (2135 aa).

The N-terminal stretch at 1–19 is a signal peptide; that stretch reads MPALGPALLQALWAGWVLT. The Sema domain occupies 20–479; sequence LQPLPPTAFT…TQSTLLKVPV (460 aa). Topologically, residues 20 to 1490 are extracellular; the sequence is LQPLPPTAFT…SPGAFPVAAQ (1471 aa). Residue N31 is glycosylated (N-linked (GlcNAc...) asparagine). Cystine bridges form between C79-C88, C111-C119, C252-C377, C268-C322, C340-C364, C482-C499, C488-C533, C491-C508, and C502-C514. Residue N334 is glycosylated (N-linked (GlcNAc...) asparagine). Residue N543 is glycosylated (N-linked (GlcNAc...) asparagine). The cysteines at positions 570 and 588 are disulfide-linked. 2 disordered regions span residues 671–829 and 849–884; these read MVAS…TTFP and LPEADEWTGGDAPAFSTSTLLSGDGDSAELEGPPAP. Pro residues predominate over residues 681–697; the sequence is SPDPPARGGPSPSPPTA. Composition is skewed to low complexity over residues 698–710 and 734–754; these read PKALATPAPDTLP and SPWGPWAGSGSISSPGSTGSP. IPT/TIG domains follow at residues 1070–1160, 1162–1249, and 1252–1375; these read PLIH…FAYQ, PKVH…FKYT, and PNIT…FSYE. N-linked (GlcNAc...) asparagine glycans are attached at residues N1183, N1253, and N1330. Residues 1491-1511 traverse the membrane as a helical segment; that stretch reads VGLGVGTSLLALGVIIIVLMY. The stretch at 1507–1539 forms a coiled coil; that stretch reads IVLMYRRKSKQALRDYKKVQIQLENLESSVRDR. The Cytoplasmic portion of the chain corresponds to 1512–2135; it reads RRKSKQALRD…AAVENKVTDL (624 aa). A disordered region spans residues 1883–1908; that stretch reads PWHLVKPSDEPEPPRPRRGSLRGGER. The segment covering 1888-1897 has biased composition (basic and acidic residues); it reads KPSDEPEPPR.

Belongs to the plexin family. Monomer, and heterodimer with PLXNB2 after proteolytic processing. Binds RAC1 that has been activated by GTP binding. Interaction with SEMA4D promotes binding of cytoplasmic ligands. Interacts with PLXNA1. Interacts with ARHGEF11 and ARHGEF12. Interacts with ERBB2. Interacts with MET. Interacts with MST1R. Interacts with RRAS. Interacts with RHOD. Interacts with RND1. Interacts with NRP1 and NRP2. In terms of processing, phosphorylated on tyrosine residues by ERBB2 and MET upon SEMA4D binding. Post-translationally, proteolytic processing favors heterodimerization with PLXNB2 and SEMA4D binding. Highly expressed in fetal kidney, and at slightly lower levels in fetal brain, lung and liver.

The protein localises to the cell membrane. It is found in the secreted. Receptor for SEMA4D. Plays a role in GABAergic synapse development. Mediates SEMA4A- and SEMA4D-dependent inhibitory synapse development. Plays a role in RHOA activation and subsequent changes of the actin cytoskeleton. Plays a role in axon guidance, invasive growth and cell migration. The polypeptide is Plexin-B1 (PLXNB1) (Homo sapiens (Human)).